Consider the following 162-residue polypeptide: NADH-quinone oxidoreductase subunit I (162 aa).

4Fe-4S ferredoxin-type domains follow at residues 52-82 and 93-122; these read LRRY…IEAG and TRYD…EGPN. 8 residues coordinate [4Fe-4S] cluster: Cys-62, Cys-65, Cys-68, Cys-72, Cys-102, Cys-105, Cys-108, and Cys-112.

This sequence belongs to the complex I 23 kDa subunit family. In terms of assembly, NDH-1 is composed of 14 different subunits. Subunits NuoA, H, J, K, L, M, N constitute the membrane sector of the complex. It depends on [4Fe-4S] cluster as a cofactor.

It localises to the cell inner membrane. The catalysed reaction is a quinone + NADH + 5 H(+)(in) = a quinol + NAD(+) + 4 H(+)(out). Its function is as follows. NDH-1 shuttles electrons from NADH, via FMN and iron-sulfur (Fe-S) centers, to quinones in the respiratory chain. The immediate electron acceptor for the enzyme in this species is believed to be ubiquinone. Couples the redox reaction to proton translocation (for every two electrons transferred, four hydrogen ions are translocated across the cytoplasmic membrane), and thus conserves the redox energy in a proton gradient. The chain is NADH-quinone oxidoreductase subunit I from Methylocella silvestris (strain DSM 15510 / CIP 108128 / LMG 27833 / NCIMB 13906 / BL2).